The chain runs to 571 residues: Proline--tRNA ligase (571 aa).

The protein belongs to the class-II aminoacyl-tRNA synthetase family. ProS type 1 subfamily. Homodimer.

The protein localises to the cytoplasm. It carries out the reaction tRNA(Pro) + L-proline + ATP = L-prolyl-tRNA(Pro) + AMP + diphosphate. Functionally, catalyzes the attachment of proline to tRNA(Pro) in a two-step reaction: proline is first activated by ATP to form Pro-AMP and then transferred to the acceptor end of tRNA(Pro). As ProRS can inadvertently accommodate and process non-cognate amino acids such as alanine and cysteine, to avoid such errors it has two additional distinct editing activities against alanine. One activity is designated as 'pretransfer' editing and involves the tRNA(Pro)-independent hydrolysis of activated Ala-AMP. The other activity is designated 'posttransfer' editing and involves deacylation of mischarged Ala-tRNA(Pro). The misacylated Cys-tRNA(Pro) is not edited by ProRS. This Shewanella frigidimarina (strain NCIMB 400) protein is Proline--tRNA ligase.